The primary structure comprises 309 residues: Protein FdhE homolog (309 aa).

It belongs to the FdhE family.

Its subcellular location is the cytoplasm. Necessary for formate dehydrogenase activity. This chain is Protein FdhE homolog, found in Pasteurella multocida (strain Pm70).